Consider the following 342-residue polypeptide: Trace amine-associated receptor 3 (342 aa).

Over Met1–Tyr35 the chain is Extracellular. Asn18 and Asn25 each carry an N-linked (GlcNAc...) asparagine glycan. Cystine bridges form between Cys21/Cys185 and Cys104/Cys189. Residues Leu36–Ile56 traverse the membrane as a helical segment. Topologically, residues Ser57 to Phe68 are cytoplasmic. Residues Leu69–Met89 traverse the membrane as a helical segment. Residues Val90–Arg150 are Extracellular-facing. Residues Leu151–Leu168 form a helical membrane-spanning segment. The Cytoplasmic segment spans residues Ser169 to Asn172. The tract at residues Val173–Phe186 is extracellular Loop 2 (ECL2). The chain crosses the membrane as a helical span at residues Val173–Phe193. At Asn194–Gly198 the chain is on the extracellular side. A helical transmembrane segment spans residues Thr199–Val223. Over Ser224 to Thr256 the chain is Cytoplasmic. A helical transmembrane segment spans residues Leu257–Ile277. Residues Asp278–Pro286 lie on the Extracellular side of the membrane. Residues Ile287–Ile307 form a helical membrane-spanning segment. The Cytoplasmic portion of the chain corresponds to His308 to His342.

This sequence belongs to the G-protein coupled receptor 1 family.

The protein resides in the cell membrane. Functionally, olfactory receptor activated by several primary trace amines, including isoamylamine. Activated by isoamylamine and cyclohexylamine, but not to the corresponding alcohols, isoamylalcohol and cyclohexanol. This receptor is probably mediated by the G(s)-class of G-proteins which activate adenylate cyclase. The protein is Trace amine-associated receptor 3 (Taar3) of Rattus norvegicus (Rat).